We begin with the raw amino-acid sequence, 118 residues long: MNALNQAHCEACRADAPKVSDDELAELILQIPDWNIEVRDGHMELERVFLFKNFKHALAFTNAIGEIAEAEGHHPGLLTEWGKVTVTWWSHSIKGLHRNDFIMCARTDEVAKTAEGRK.

Belongs to the pterin-4-alpha-carbinolamine dehydratase family.

It carries out the reaction (4aS,6R)-4a-hydroxy-L-erythro-5,6,7,8-tetrahydrobiopterin = (6R)-L-erythro-6,7-dihydrobiopterin + H2O. This Pseudomonas entomophila (strain L48) protein is Putative pterin-4-alpha-carbinolamine dehydratase.